The following is a 127-amino-acid chain: Large ribosomal subunit protein bL17 (127 aa).

The protein belongs to the bacterial ribosomal protein bL17 family. Part of the 50S ribosomal subunit. Contacts protein L32.

This chain is Large ribosomal subunit protein bL17, found in Stenotrophomonas maltophilia (strain K279a).